The chain runs to 355 residues: UDP-N-acetylglucosamine--N-acetylmuramyl-(pentapeptide) pyrophosphoryl-undecaprenol N-acetylglucosamine transferase (355 aa).

UDP-N-acetyl-alpha-D-glucosamine is bound by residues 15–17 (TGG), asparagine 127, arginine 163, serine 191, isoleucine 244, 263–268 (ALTVSE), and glutamine 288.

This sequence belongs to the glycosyltransferase 28 family. MurG subfamily.

Its subcellular location is the cell inner membrane. It catalyses the reaction di-trans,octa-cis-undecaprenyl diphospho-N-acetyl-alpha-D-muramoyl-L-alanyl-D-glutamyl-meso-2,6-diaminopimeloyl-D-alanyl-D-alanine + UDP-N-acetyl-alpha-D-glucosamine = di-trans,octa-cis-undecaprenyl diphospho-[N-acetyl-alpha-D-glucosaminyl-(1-&gt;4)]-N-acetyl-alpha-D-muramoyl-L-alanyl-D-glutamyl-meso-2,6-diaminopimeloyl-D-alanyl-D-alanine + UDP + H(+). It participates in cell wall biogenesis; peptidoglycan biosynthesis. Its function is as follows. Cell wall formation. Catalyzes the transfer of a GlcNAc subunit on undecaprenyl-pyrophosphoryl-MurNAc-pentapeptide (lipid intermediate I) to form undecaprenyl-pyrophosphoryl-MurNAc-(pentapeptide)GlcNAc (lipid intermediate II). In Salmonella enteritidis PT4 (strain P125109), this protein is UDP-N-acetylglucosamine--N-acetylmuramyl-(pentapeptide) pyrophosphoryl-undecaprenol N-acetylglucosamine transferase.